The primary structure comprises 339 residues: UDP-N-acetylenolpyruvoylglucosamine reductase (339 aa).

The FAD-binding PCMH-type domain occupies 19-189; it reads VDVQARLFAE…LRVRFKLSRV (171 aa). Arg166 is a catalytic residue. Residue Ser239 is the Proton donor of the active site. Glu335 is a catalytic residue.

Belongs to the MurB family. Requires FAD as cofactor.

It is found in the cytoplasm. The enzyme catalyses UDP-N-acetyl-alpha-D-muramate + NADP(+) = UDP-N-acetyl-3-O-(1-carboxyvinyl)-alpha-D-glucosamine + NADPH + H(+). It participates in cell wall biogenesis; peptidoglycan biosynthesis. In terms of biological role, cell wall formation. This Pseudomonas savastanoi pv. phaseolicola (strain 1448A / Race 6) (Pseudomonas syringae pv. phaseolicola (strain 1448A / Race 6)) protein is UDP-N-acetylenolpyruvoylglucosamine reductase.